We begin with the raw amino-acid sequence, 275 residues long: Nitrogenase iron protein 1 (275 aa).

Residue glycine 9 to serine 16 coordinates ATP. Residue cysteine 97 participates in [4Fe-4S] cluster binding. Arginine 100 is modified (ADP-ribosylarginine; by dinitrogenase reductase ADP-ribosyltransferase). A [4Fe-4S] cluster-binding site is contributed by cysteine 132.

This sequence belongs to the NifH/BchL/ChlL family. In terms of assembly, homodimer. Requires [4Fe-4S] cluster as cofactor. The reversible ADP-ribosylation of Arg-100 inactivates the nitrogenase reductase and regulates nitrogenase activity.

It carries out the reaction N2 + 8 reduced [2Fe-2S]-[ferredoxin] + 16 ATP + 16 H2O = H2 + 8 oxidized [2Fe-2S]-[ferredoxin] + 2 NH4(+) + 16 ADP + 16 phosphate + 6 H(+). The key enzymatic reactions in nitrogen fixation are catalyzed by the nitrogenase complex, which has 2 components: the iron protein and the molybdenum-iron protein. The sequence is that of Nitrogenase iron protein 1 (nifH1) from Methanosarcina barkeri.